A 159-amino-acid polypeptide reads, in one-letter code: Neurotrophin-3 (159 aa).

Residues 1–3 (IQS) form the signal peptide. Positions 4–115 (TSMDQGILTE…VQNRTSRRKR (112 aa)) are excised as a propeptide. A disordered region spans residues 91 to 129 (APLEPPPLYLTEEPLVQNRTSRRKREGKRHRGEYSVCDS). N-linked (GlcNAc...) asparagine glycosylation occurs at N108. Over residues 110–121 (TSRRKREGKRHR) the composition is skewed to basic residues.

It belongs to the NGF-beta family.

Its subcellular location is the secreted. Functionally, seems to promote the survival of visceral and proprioceptive sensory neurons. The sequence is that of Neurotrophin-3 (NTF3) from Candoia carinata (Papuan tree boa).